A 431-amino-acid chain; its full sequence is Trigger factor (431 aa).

Positions 163–248 (GDTVVIDYAG…IHEVKGKELP (86 aa)) constitute a PPIase FKBP-type domain.

This sequence belongs to the FKBP-type PPIase family. Tig subfamily.

It is found in the cytoplasm. It catalyses the reaction [protein]-peptidylproline (omega=180) = [protein]-peptidylproline (omega=0). Involved in protein export. Acts as a chaperone by maintaining the newly synthesized protein in an open conformation. Functions as a peptidyl-prolyl cis-trans isomerase. This Latilactobacillus sakei subsp. sakei (strain 23K) (Lactobacillus sakei subsp. sakei) protein is Trigger factor.